Consider the following 624-residue polypeptide: tRNA uridine 5-carboxymethylaminomethyl modification enzyme MnmG (624 aa).

Residues 13 to 18 (GGGHAG), V125, and S180 contribute to the FAD site. NAD(+) is bound at residue 273 to 287 (GPRYCPSIEDKIVRF). Q370 contacts FAD.

The protein belongs to the MnmG family. Homodimer. Heterotetramer of two MnmE and two MnmG subunits. The cofactor is FAD.

It is found in the cytoplasm. Functionally, NAD-binding protein involved in the addition of a carboxymethylaminomethyl (cmnm) group at the wobble position (U34) of certain tRNAs, forming tRNA-cmnm(5)s(2)U34. In Legionella pneumophila (strain Lens), this protein is tRNA uridine 5-carboxymethylaminomethyl modification enzyme MnmG.